A 266-amino-acid chain; its full sequence is Eukaryotic translation initiation factor 3 subunit J (266 aa).

2 disordered regions span residues 1 to 142 and 215 to 243; these read MAPS…VSDS and MSNE…VSLV. A compositionally biased stretch (acidic residues) spans 26-44; the sequence is DEEEEDVLDSWDAAEDSEV. A coiled-coil region spans residues 40–99; sequence EDSEVEREKAAKAAEAKAKAEAEAAAKKKSKAQRIQEHKEERKKREEEDSSSESEEDEAE. Basic and acidic residues-rich tracts occupy residues 45-65 and 73-86; these read EREK…EAAA and RIQE…KREE. Over residues 87–97 the composition is skewed to acidic residues; the sequence is EDSSSESEEDE. 2 stretches are compositionally biased toward basic and acidic residues: residues 98 to 118 and 218 to 230; these read AERR…HAED and EKMR…DKGN.

It belongs to the eIF-3 subunit J family. In terms of assembly, component of the eukaryotic translation initiation factor 3 (eIF-3) complex.

Its subcellular location is the cytoplasm. Its function is as follows. Component of the eukaryotic translation initiation factor 3 (eIF-3) complex, which is involved in protein synthesis of a specialized repertoire of mRNAs and, together with other initiation factors, stimulates binding of mRNA and methionyl-tRNAi to the 40S ribosome. The eIF-3 complex specifically targets and initiates translation of a subset of mRNAs involved in cell proliferation. This Aspergillus terreus (strain NIH 2624 / FGSC A1156) protein is Eukaryotic translation initiation factor 3 subunit J (hcr1).